Here is a 347-residue protein sequence, read N- to C-terminus: MKLSCMLIEWALYVCPAVLLATQMSLAASLETLKCEGPVSTEHSSCLAATEEDEGDDDMARSGEADFRFKGYTFSKPFHLIVSYDWLILQGPATSIFEGDTLVLHCRAWQDWPLTQVIFYREGSALGPPGSKSEFSIAVARKSDSGHYHCSGIFRSPGPGSQETASPVAITVQELFAAPVLKALPSSGPQEGGSVTLSCETKLSLQRSASRLLFSFYKDGRSLSSRGISSEFRIPEASEEHSGSYWCEAATEDRQISKQSPELEIRVQALQKPATPETPPPAKAPGPLPLLPTPSDEQPVFSFSDPYLTYRINRLLRQMQDVRILLGHLVMELRNLSAHRKPATTKS.

Positions 1-27 (MKLSCMLIEWALYVCPAVLLATQMSLA) are cleaved as a signal peptide. Ig-like C2-type domains follow at residues 77–166 (PFHL…ETAS) and 179–257 (PVLK…RQIS). 2 disulfides stabilise this stretch: C106/C150 and C199/C247. The segment at 272-296 (KPATPETPPPAKAPGPLPLLPTPSD) is disordered. Residues 276 to 292 (PETPPPAKAPGPLPLLP) are compositionally biased toward pro residues.

In terms of assembly, monomer or homodimer; disulfide-linked.

The protein localises to the cytoplasm. May be implicated in B-cell differentiation and lymphomagenesis. In Rattus norvegicus (Rat), this protein is Fc receptor-like A (Fcrla).